Reading from the N-terminus, the 126-residue chain is Histone H2B type 1-N (126 aa).

Over residues 1–12 (MPEPSKSAPAPK) the composition is skewed to low complexity. Residues 1–36 (MPEPSKSAPAPKKGSKKAVTKAQKKDGKKRKRSRKE) form a disordered region. Residue Pro2 is modified to N-acetylproline. At Glu3 the chain carries ADP-ribosyl glutamic acid. N6-(2-hydroxyisobutyryl)lysine; alternate is present on Lys6. Lys6 carries the N6-(beta-hydroxybutyryl)lysine; alternate modification. Lys6 carries the N6-acetyllysine; alternate modification. Lys6 carries the post-translational modification N6-butyryllysine; alternate. Lys6 bears the N6-crotonyllysine; alternate mark. The residue at position 6 (Lys6) is an N6-lactoyllysine; alternate. A Glycyl lysine isopeptide (Lys-Gly) (interchain with G-Cter in SUMO2); alternate cross-link involves residue Lys6. Ser7 bears the ADP-ribosylserine mark. Lys12 carries the N6-(beta-hydroxybutyryl)lysine; alternate modification. N6-acetyllysine; alternate occurs at positions 12 and 13. An N6-crotonyllysine; alternate mark is found at Lys12 and Lys13. Lys12 is subject to N6-lactoyllysine; alternate. The residue at position 13 (Lys13) is an N6-(2-hydroxyisobutyryl)lysine; alternate. Position 15 is a phosphoserine; by STK4/MST1 (Ser15). Lys16, Lys17, Lys21, and Lys24 each carry N6-acetyllysine; alternate. Lys16, Lys17, Lys21, and Lys24 each carry N6-crotonyllysine; alternate. An N6-lactoyllysine; alternate mark is found at Lys16, Lys17, Lys21, and Lys24. N6-glutaryllysine; alternate is present on Lys17. N6-(2-hydroxyisobutyryl)lysine; alternate is present on residues Lys21 and Lys24. At Lys21 the chain carries N6-(beta-hydroxybutyryl)lysine; alternate. N6-butyryllysine; alternate is present on Lys21. Lys21 participates in a covalent cross-link: Glycyl lysine isopeptide (Lys-Gly) (interchain with G-Cter in SUMO2); alternate. The residue at position 25 (Lys25) is an N6-(2-hydroxyisobutyryl)lysine. Lys35 is subject to N6-(2-hydroxyisobutyryl)lysine; alternate. Lys35 is subject to N6-(beta-hydroxybutyryl)lysine; alternate. Lys35 is subject to N6-crotonyllysine; alternate. Lys35 carries the N6-glutaryllysine; alternate modification. An N6-succinyllysine; alternate modification is found at Lys35. Lys35 is covalently cross-linked (Glycyl lysine isopeptide (Lys-Gly) (interchain with G-Cter in ubiquitin); alternate). Glu36 is subject to PolyADP-ribosyl glutamic acid. Residue Ser37 is modified to Phosphoserine; by AMPK. An N6-(2-hydroxyisobutyryl)lysine; alternate mark is found at Lys44, Lys47, and Lys58. Lys44 bears the N6-lactoyllysine; alternate mark. Lys44 and Lys47 each carry N6-glutaryllysine; alternate. Lys47 bears the N6-methyllysine; alternate mark. Lys58 carries the N6,N6-dimethyllysine; alternate modification. Arg80 carries the dimethylated arginine modification. Residue Lys86 is modified to N6-(2-hydroxyisobutyryl)lysine; alternate. Position 86 is an N6-acetyllysine; alternate (Lys86). Lys86 carries the N6-lactoyllysine; alternate modification. Residue Lys86 is modified to N6,N6,N6-trimethyllysine; alternate. Residues Arg87 and Arg93 each carry the omega-N-methylarginine modification. The residue at position 109 (Lys109) is an N6-(2-hydroxyisobutyryl)lysine; alternate. An N6-lactoyllysine; alternate modification is found at Lys109. Lys109 carries the post-translational modification N6-glutaryllysine; alternate. Lys109 is subject to N6-methyllysine; alternate. Ser113 carries an O-linked (GlcNAc) serine glycan. Thr116 bears the Phosphothreonine mark. 2 positions are modified to N6-(2-hydroxyisobutyryl)lysine; alternate: Lys117 and Lys121. At Lys117 the chain carries N6-(beta-hydroxybutyryl)lysine; alternate. An N6-lactoyllysine; alternate mark is found at Lys117 and Lys121. Lys117 and Lys121 each carry N6-glutaryllysine; alternate. 2 positions are modified to N6-succinyllysine; alternate: Lys117 and Lys121. Lys117 carries the post-translational modification N6-methylated lysine; alternate. Lys121 is covalently cross-linked (Glycyl lysine isopeptide (Lys-Gly) (interchain with G-Cter in ubiquitin); alternate).

This sequence belongs to the histone H2B family. The nucleosome is a histone octamer containing two molecules each of H2A, H2B, H3 and H4 assembled in one H3-H4 heterotetramer and two H2A-H2B heterodimers. The octamer wraps approximately 147 bp of DNA. Monoubiquitination at Lys-35 (H2BK34Ub) by the MSL1/MSL2 dimer is required for histone H3 'Lys-4' (H3K4me) and 'Lys-79' (H3K79me) methylation and transcription activation at specific gene loci, such as HOXA9 and MEIS1 loci. Similarly, monoubiquitination at Lys-121 (H2BK120Ub) by the RNF20/40 complex gives a specific tag for epigenetic transcriptional activation and is also prerequisite for histone H3 'Lys-4' and 'Lys-79' methylation. It also functions cooperatively with the FACT dimer to stimulate elongation by RNA polymerase II. H2BK120Ub also acts as a regulator of mRNA splicing: deubiquitination by USP49 is required for efficient cotranscriptional splicing of a large set of exons. Post-translationally, phosphorylated on Ser-15 (H2BS14ph) by STK4/MST1 during apoptosis; which facilitates apoptotic chromatin condensation. Also phosphorylated on Ser-15 in response to DNA double strand breaks (DSBs), and in correlation with somatic hypermutation and immunoglobulin class-switch recombination. Phosphorylation at Ser-37 (H2BS36ph) by AMPK in response to stress promotes transcription. In terms of processing, glcNAcylation at Ser-113 promotes monoubiquitination of Lys-121. It fluctuates in response to extracellular glucose, and associates with transcribed genes. ADP-ribosylated by PARP1 or PARP2 on Ser-7 (H2BS6ADPr) in response to DNA damage. H2BS6ADPr promotes recruitment of CHD1L. Mono-ADP-ribosylated on Glu-3 (H2BE2ADPr) by PARP3 in response to single-strand breaks. Poly ADP-ribosylation on Glu-36 (H2BE35ADPr) by PARP1 regulates adipogenesis: it inhibits phosphorylation at Ser-37 (H2BS36ph), thereby blocking expression of pro-adipogenetic genes. Post-translationally, crotonylation (Kcr) is specifically present in male germ cells and marks testis-specific genes in post-meiotic cells, including X-linked genes that escape sex chromosome inactivation in haploid cells. Crotonylation marks active promoters and enhancers and confers resistance to transcriptional repressors. It is also associated with post-meiotically activated genes on autosomes. In terms of processing, lactylated in macrophages by EP300/P300 by using lactoyl-CoA directly derived from endogenous or exogenous lactate, leading to stimulates gene transcription.

It is found in the nucleus. The protein localises to the chromosome. Functionally, core component of nucleosome. Nucleosomes wrap and compact DNA into chromatin, limiting DNA accessibility to the cellular machineries which require DNA as a template. Histones thereby play a central role in transcription regulation, DNA repair, DNA replication and chromosomal stability. DNA accessibility is regulated via a complex set of post-translational modifications of histones, also called histone code, and nucleosome remodeling. The protein is Histone H2B type 1-N (H2BC15) of Bos taurus (Bovine).